The following is a 68-amino-acid chain: Large ribosomal subunit protein bL35 (68 aa).

It belongs to the bacterial ribosomal protein bL35 family.

This is Large ribosomal subunit protein bL35 from Rickettsia bellii (strain RML369-C).